Consider the following 161-residue polypeptide: Globin CTT-IX (161 aa).

The first 16 residues, 1–16, serve as a signal peptide directing secretion; that stretch reads MKFFIVLALCIVGAIA. In terms of domain architecture, Globin spans 18–161; the sequence is PVSSDQANAI…NIFGMIFAHL (144 aa). Residues His76 and His111 each coordinate heme b.

The protein belongs to the globin family. In terms of assembly, homodimer.

The chain is Globin CTT-IX (CTT-9) from Chironomus thummi thummi (Midge).